The following is a 314-amino-acid chain: tRNA N6-adenosine threonylcarbamoyltransferase (314 aa).

Fe cation is bound by residues histidine 106, histidine 110, and tyrosine 127. Substrate contacts are provided by residues tyrosine 127–alanine 131, aspartate 159, glycine 172, glutamate 176, and asparagine 255. Aspartate 283 is a binding site for Fe cation.

This sequence belongs to the KAE1 / TsaD family. Fe(2+) serves as cofactor.

The protein resides in the cytoplasm. The catalysed reaction is L-threonylcarbamoyladenylate + adenosine(37) in tRNA = N(6)-L-threonylcarbamoyladenosine(37) in tRNA + AMP + H(+). Its function is as follows. Required for the formation of a threonylcarbamoyl group on adenosine at position 37 (t(6)A37) in tRNAs that read codons beginning with adenine. Is probably involved in the transfer of the threonylcarbamoyl moiety of threonylcarbamoyl-AMP (TC-AMP) to the N6 group of A37. This Nanoarchaeum equitans (strain Kin4-M) protein is tRNA N6-adenosine threonylcarbamoyltransferase.